A 485-amino-acid chain; its full sequence is Protein nucleotidyltransferase YdiU (485 aa).

Gly-90, Gly-92, Arg-93, Lys-113, Asp-125, Gly-126, Arg-176, and Arg-183 together coordinate ATP. Asp-252 acts as the Proton acceptor in catalysis. Asn-253 and Asp-262 together coordinate Mg(2+). Residue Asp-262 participates in ATP binding.

It belongs to the SELO family. It depends on Mg(2+) as a cofactor. Mn(2+) serves as cofactor.

The catalysed reaction is L-seryl-[protein] + ATP = 3-O-(5'-adenylyl)-L-seryl-[protein] + diphosphate. The enzyme catalyses L-threonyl-[protein] + ATP = 3-O-(5'-adenylyl)-L-threonyl-[protein] + diphosphate. It catalyses the reaction L-tyrosyl-[protein] + ATP = O-(5'-adenylyl)-L-tyrosyl-[protein] + diphosphate. It carries out the reaction L-histidyl-[protein] + UTP = N(tele)-(5'-uridylyl)-L-histidyl-[protein] + diphosphate. The catalysed reaction is L-seryl-[protein] + UTP = O-(5'-uridylyl)-L-seryl-[protein] + diphosphate. The enzyme catalyses L-tyrosyl-[protein] + UTP = O-(5'-uridylyl)-L-tyrosyl-[protein] + diphosphate. Nucleotidyltransferase involved in the post-translational modification of proteins. It can catalyze the addition of adenosine monophosphate (AMP) or uridine monophosphate (UMP) to a protein, resulting in modifications known as AMPylation and UMPylation. The protein is Protein nucleotidyltransferase YdiU of Aliivibrio salmonicida (strain LFI1238) (Vibrio salmonicida (strain LFI1238)).